A 201-amino-acid chain; its full sequence is Glycolipid transfer protein (201 aa).

The tract at residues 28–168 is glycolipid transfer protein homology domain; the sequence is IATTQFLEAC…KDFYAKLGDD (141 aa).

Its function is as follows. Cargo transport protein that plays a key role in transport and secretion of liamocins, glycolipids (also called heavy oils) composed of a single mannitol or arabitol headgroup linked to either three, four or even six 3,5-dihydroxydecanoic ester tail-groups. The protein is Glycolipid transfer protein of Aureobasidium melanogenum (Aureobasidium pullulans var. melanogenum).